Reading from the N-terminus, the 120-residue chain is Flagellar transcriptional regulator FlhD (120 aa).

It belongs to the FlhD family. As to quaternary structure, homodimer; disulfide-linked. Forms a heterohexamer composed of two FlhC and four FlhD subunits. Each FlhC binds a FlhD dimer, forming a heterotrimer, and a hexamer assembles by dimerization of two heterotrimers.

The protein localises to the cytoplasm. In terms of biological role, functions in complex with FlhC as a master transcriptional regulator that regulates transcription of several flagellar and non-flagellar operons by binding to their promoter region. Activates expression of class 2 flagellar genes, including fliA, which is a flagellum-specific sigma factor that turns on the class 3 genes. Also regulates genes whose products function in a variety of physiological pathways. This Erwinia tasmaniensis (strain DSM 17950 / CFBP 7177 / CIP 109463 / NCPPB 4357 / Et1/99) protein is Flagellar transcriptional regulator FlhD.